Reading from the N-terminus, the 272-residue chain is Undecaprenyl-diphosphatase (272 aa).

8 helical membrane-spanning segments follow: residues Phe4–Ile24, Gly43–Tyr63, Ile86–Ile106, Val109–Trp129, Ile145–Thr165, Thr186–Ile206, Val222–Val242, and Val249–Asn269.

It belongs to the UppP family.

The protein resides in the cell inner membrane. It catalyses the reaction di-trans,octa-cis-undecaprenyl diphosphate + H2O = di-trans,octa-cis-undecaprenyl phosphate + phosphate + H(+). Its function is as follows. Catalyzes the dephosphorylation of undecaprenyl diphosphate (UPP). Confers resistance to bacitracin. This is Undecaprenyl-diphosphatase from Acinetobacter baumannii (strain AB307-0294).